The following is a 383-amino-acid chain: L-lactate dehydrogenase (383 aa).

The region spanning 1 to 380 (MIVSSTTDFR…NETILAERVP (380 aa)) is the FMN hydroxy acid dehydrogenase domain. A substrate-binding site is contributed by tyrosine 24. FMN-binding residues include serine 106 and glutamine 127. Substrate is bound at residue tyrosine 129. Residue threonine 155 coordinates FMN. Arginine 164 provides a ligand contact to substrate. Lysine 251 serves as a coordination point for FMN. Residue histidine 275 is the Proton acceptor of the active site. Arginine 278 is a binding site for substrate. 306–330 (DGGVRSGLDVVRMLALGARGVLIGR) provides a ligand contact to FMN.

It belongs to the FMN-dependent alpha-hydroxy acid dehydrogenase family. The cofactor is FMN.

The protein resides in the cell inner membrane. It carries out the reaction (S)-lactate + A = pyruvate + AH2. In terms of biological role, catalyzes the conversion of L-lactate to pyruvate. Is coupled to the respiratory chain. The chain is L-lactate dehydrogenase from Caulobacter vibrioides (strain ATCC 19089 / CIP 103742 / CB 15) (Caulobacter crescentus).